A 265-amino-acid polypeptide reads, in one-letter code: Tryptophan 2,3-dioxygenase (265 aa).

Substrate contacts are provided by residues 38–42 and Arg104; that span reads FIVVH. Residue His223 coordinates heme. Residue Thr237 coordinates substrate.

It belongs to the tryptophan 2,3-dioxygenase family. As to quaternary structure, homotetramer. It depends on heme as a cofactor.

It catalyses the reaction L-tryptophan + O2 = N-formyl-L-kynurenine. The protein operates within amino-acid degradation; L-tryptophan degradation via kynurenine pathway; L-kynurenine from L-tryptophan: step 1/2. Functionally, heme-dependent dioxygenase that catalyzes the oxidative cleavage of the L-tryptophan (L-Trp) pyrrole ring and converts L-tryptophan to N-formyl-L-kynurenine. Catalyzes the oxidative cleavage of the indole moiety. This is Tryptophan 2,3-dioxygenase from Anaeromyxobacter dehalogenans (strain 2CP-C).